A 783-amino-acid chain; its full sequence is ATP-dependent DNA helicase Hel308 (783 aa).

Residues Gln-29 and 47–54 (VPTASGKT) contribute to the ATP site. One can recognise a Helicase ATP-binding domain in the interval 34–209 (ERGVTEGANL…WLDAELVDSD (176 aa)). Residues 154–157 (DEVH) carry the DEAH box motif. In terms of domain architecture, Helicase C-terminal spans 242–443 (QTAAVVADTL…EPALRTHVLA (202 aa)). Positions 744 to 783 (ETVGHPDPGMDGVAADTDAAPESGGEAGGDEGQASLGDFS) are disordered.

It belongs to the helicase family. Hel308 subfamily. In terms of assembly, monomer.

The enzyme catalyses Couples ATP hydrolysis with the unwinding of duplex DNA by translocating in the 3'-5' direction.. The catalysed reaction is ATP + H2O = ADP + phosphate + H(+). Its function is as follows. DNA-dependent ATPase and 3'-5' DNA helicase that may be involved in repair of stalled replication forks. This chain is ATP-dependent DNA helicase Hel308, found in Halobacterium salinarum (strain ATCC 700922 / JCM 11081 / NRC-1) (Halobacterium halobium).